A 254-amino-acid chain; its full sequence is MKICLVDETGAGDGALSVLAARWGLEHDEQNLMALVMTPEHLELRKRDEPKLGGIFVDFADGAMAHRRKFGGGRGEAVAKAVGVKGSYLPDVVDATAGLGRDAFVLASVGCRVRMLERNPVVAALLDDGLARGYADPEIGAWLQERLQLIHASSLTALTDITPRPQVVYLDPMFPHKQKSALVKKEMRVFQSLVGPDLDADGLLEPARLLATKRVVVKRPDYAPPLADVATTNAVTTKGHRFDIYSGTAEVSAV.

Residues 101-102, 117-118, 153-154, and aspartate 171 each bind S-adenosyl-L-methionine; these read RD, ER, and SS.

The protein belongs to the methyltransferase superfamily. RsmJ family.

The protein resides in the cytoplasm. The catalysed reaction is guanosine(1516) in 16S rRNA + S-adenosyl-L-methionine = N(2)-methylguanosine(1516) in 16S rRNA + S-adenosyl-L-homocysteine + H(+). Its function is as follows. Specifically methylates the guanosine in position 1516 of 16S rRNA. The protein is Ribosomal RNA small subunit methyltransferase J of Enterobacter sp. (strain 638).